Consider the following 881-residue polypeptide: Mechanosensitive ion channel protein 5 (881 aa).

Basic and acidic residues-rich tracts occupy residues 1-12 (MAAVDSTDRRDF) and 48-59 (DGEKGKNDKKGD). Residues 1 to 248 (MAAVDSTDRR…RNGFEEEEEE (248 aa)) form a disordered region. Positions 115–145 (ELQSNTPPRPATASNTPRRGLTTISESSSPV) are enriched in polar residues. Residues 169-179 (EEGRNRDEAEV) are compositionally biased toward basic and acidic residues. Phosphoserine is present on Ser-231. 6 helical membrane-spanning segments follow: residues 265–285 (LSFW…SLVC), 309–329 (VLVL…IVFL), 349–369 (KSVQ…FLFD), 387–407 (VLVC…LVKV), 642–662 (IINV…LGIA), and 677–697 (VAFV…FLFV). A disordered region spans residues 861 to 881 (PTANPTSSDRIPPSWMQQRGP). Residues 864–881 (NPTSSDRIPPSWMQQRGP) are compositionally biased toward polar residues.

Belongs to the MscS (TC 1.A.23) family.

It is found in the membrane. In terms of biological role, mechanosensitive channel that opens in response to stretch forces in the membrane lipid bilayer. The polypeptide is Mechanosensitive ion channel protein 5 (MSL5) (Arabidopsis thaliana (Mouse-ear cress)).